An 876-amino-acid chain; its full sequence is MQEQYRPAAIEPAAQKKWDDARIFNVSEDASKPKYYCLSMFPYPSGKLHMGHVRNYTIGDVLSRFKLLNGFNVMQPMGWDAFGMPAENAAMKNNVAPAAWTYDNIEYMKTQLKSLGFAIDWARETATCKPEYYRWEQWLFTKLFEKGIVYRKNGTVNWDPVDQTVLANEQVIDGRGWRSGALIEKREIPMYYFKITDYAEELLNDLDKLEHWPEQVKTMQRNWIGKSRGMTVRFAVSDDSKQGLEGDYAKFLQVYTTRPDTLMGATYVAVAAEHPLAAAAAADKPELQAFIAECKAGSVAEADMATMEKKGVPTGRYVVNPLNGDKLEVWIANYVLWGYGDGAVMAVPAHDERDFEFATKYNLPKKQVIAVGDNAFDENQWQEWYGDKENGVLVNSGDLDGLDFQTAFDAVAAKLQSQGAGEPKTQYRLRDWGISRQRYWGCPIPIVHCEQCGDVPVPADQLPVVLPENVVPDGMGSPLAKMPEFYETACPCCGGAAKRETDTMDTFMESSWYFFRYMSPKFSDGMVDPAAAKYWGAVDQYIGGIEHAILHLLYARFFTKLMRDEGLVNVDEPFERLLTQGMVVCETYYRENDKGGKDWINPADVELTFDDKGRPISAVLKADGLPVVISGTEKMSKSKNNGVDPQELINAYGADTARLFMMFAAPPEQSLEWSDSGVEGAHRFLRRLWRTVYEYLKQGEAVKAFAGSQDGLSKELKDLRHKLHATTAKVSDDYGRRQQFNTAIAAVMELLNQYDKTDTGGEQGRAVAQEVLETAVRLLWPIVPHICETLWSELNGAKLWEAGWPTVDEAALVKSEIEVMVQVNGKLRGKITVAADASKADLEAAALATEGAVKFMEGKPAKKIIVVPGRLVNIVV.

Residues proline 42–histidine 52 carry the 'HIGH' region motif. Residues lysine 634–serine 638 carry the 'KMSKS' region motif. Lysine 637 serves as a coordination point for ATP.

The protein belongs to the class-I aminoacyl-tRNA synthetase family.

It is found in the cytoplasm. It catalyses the reaction tRNA(Leu) + L-leucine + ATP = L-leucyl-tRNA(Leu) + AMP + diphosphate. This Neisseria meningitidis serogroup B (strain ATCC BAA-335 / MC58) protein is Leucine--tRNA ligase.